A 265-amino-acid chain; its full sequence is Undecaprenyl-diphosphatase (265 aa).

The next 8 membrane-spanning stretches (helical) occupy residues Gly-14 to Phe-34, Ser-40 to Trp-60, Gly-79 to Phe-99, Leu-112 to Ala-132, Met-141 to Ile-161, Ala-182 to Leu-202, Ile-217 to Val-237, and Phe-242 to Leu-262.

The protein belongs to the UppP family.

It is found in the cell membrane. It catalyses the reaction di-trans,octa-cis-undecaprenyl diphosphate + H2O = di-trans,octa-cis-undecaprenyl phosphate + phosphate + H(+). Functionally, catalyzes the dephosphorylation of undecaprenyl diphosphate (UPP). Confers resistance to bacitracin. The chain is Undecaprenyl-diphosphatase from Caldicellulosiruptor bescii (strain ATCC BAA-1888 / DSM 6725 / KCTC 15123 / Z-1320) (Anaerocellum thermophilum).